We begin with the raw amino-acid sequence, 185 residues long: Elongation factor P (185 aa).

This sequence belongs to the elongation factor P family.

The protein localises to the cytoplasm. It participates in protein biosynthesis; polypeptide chain elongation. Its function is as follows. Involved in peptide bond synthesis. Stimulates efficient translation and peptide-bond synthesis on native or reconstituted 70S ribosomes in vitro. Probably functions indirectly by altering the affinity of the ribosome for aminoacyl-tRNA, thus increasing their reactivity as acceptors for peptidyl transferase. The sequence is that of Elongation factor P from Desulfitobacterium hafniense (strain Y51).